Reading from the N-terminus, the 116-residue chain is Tyrosine-protein phosphatase 20 (116 aa).

The 116-residue stretch at 1-116 folds into the Tyrosine-protein phosphatase domain; it reads WMMIVEQKCR…EIGGDAPMVV (116 aa). D84 contacts substrate.

Belongs to the protein-tyrosine phosphatase family.

It carries out the reaction O-phospho-L-tyrosyl-[protein] + H2O = L-tyrosyl-[protein] + phosphate. In Styela plicata (Wrinkled sea squirt), this protein is Tyrosine-protein phosphatase 20 (STY-20).